A 1783-amino-acid chain; its full sequence is 6-methylsalicylic acid synthase (1783 aa).

Over residues 1–31 (MITSTSSTEVLTPANGSDDSKGTTTPATSSG) the composition is skewed to polar residues. The tract at residues 1–40 (MITSTSSTEVLTPANGSDDSKGTTTPATSSGDPEMHDDLL) is disordered. Positions 45–474 (HDDVAIIGMA…GTVSHAIIEA (430 aa)) constitute a Ketosynthase family 3 (KS3) domain. Active-site for beta-ketoacyl synthase activity residues include Cys217, His352, and His394. The malonyl-CoA:ACP transacylase (MAT) domain stretch occupies residues 587–884 (WVFSGHGAQW…TPTMVRKQPA (298 aa)). Catalysis depends on Ser673, which acts as the For acyl/malonyl transferase activity. A product template (PT) domain region spans residues 942 to 1215 (THKPAANDLL…AFAGVEGESL (274 aa)). The segment at 948-1064 (NDLLGTRTAL…ATVGADATPS (117 aa)) is N-terminal hotdog fold. Residues 948–1216 (NDLLGTRTAL…FAGVEGESLS (269 aa)) enclose the PKS/mFAS DH domain. His980 (proton acceptor; for dehydratase activity) is an active-site residue. The segment at 1078 to 1216 (PQKLSDSFSI…FAGVEGESLS (139 aa)) is C-terminal hotdog fold. The Proton donor; for dehydratase activity role is filled by Asp1130. The region spanning 1707–1781 (EYVLVVVKKC…HLVEYFCQVL (75 aa)) is the Carrier domain. Residue Ser1741 is modified to O-(pantetheine 4'-phosphoryl)serine.

It carries out the reaction 3 malonyl-CoA + acetyl-CoA + NADPH + 3 H(+) = 6-methylsalicylate + 3 CO2 + NADP(+) + 4 CoA + H2O. The protein operates within secondary metabolite biosynthesis; terpenoid biosynthesis. Functionally, non-reducing polyketide synthase; part of the gene cluster that mediates the biosynthesis of macrophorins, isoprenoid epoxycyclohexenones containing cyclized drimane moieties. The first step of the pathway is the synthesis of 6-methylsalicylic acid (6-MSA) by the polyketide synthase macA. 6-MSA is then converted to m-cresol by the decarboxylase macB. The cytochrome P450 monooxygenase macC then catalyzes the oxidation of m-cresol to toluquinol. Epoxidation of toluquinol is then performed by the short chain dehydrogenase macD, with the help of macE, and a further prenylation by macG leads to 7-deacetoxyyanuthone A. The next step is the hydroxylation of C-22 of 7-deacetoxyyanuthone A by the cytochrome P450 monooxygenase macH to yield 22-deacetylyanuthone A. O-Mevalon transferase macI then attaches mevalon to the hydroxyl group of 22-deacetylyanuthone A to produce yanuthone E. The terpene cyclase macJ catalyzes the cyclization of 22-deacetylyanuthone A to macrophorin A. MacJ is also able to catalyze cyclization of yanuthone E and 7-deacetoxyyanuthone A to their corresponding macrophorins. The macJ products can be further modified by macH and macJ, as well as by the FAD-dependent monooxygenase macF, to produce additional macrophorins, including 4'-oxomacrophorin A, 4'-oxomacrophorin D and 4'-oxomacrophorin E. In Penicillium terrestre, this protein is 6-methylsalicylic acid synthase.